Here is a 436-residue protein sequence, read N- to C-terminus: Gustatory receptor for sugar taste 61a (436 aa).

Over 1-78 (MSRTSDDIRK…PQDVKFKVRS (78 aa)) the chain is Cytoplasmic. A helical transmembrane segment spans residues 79-99 (IGLAVTGLFLLLGGMKTLVGA). The Extracellular portion of the chain corresponds to 100 to 111 (NILFTEGLNAKN). The chain crosses the membrane as a helical span at residues 112–132 (IVGLVFLIVGMVNWLNFVGFA). At 133-164 (RSWSHIMLPWSSVDILMLFPPYKRGKRSLRSK) the chain is on the cytoplasmic side. A helical transmembrane segment spans residues 165-185 (VNVLALSVVVLAVGDHMLYYA). Over 186 to 214 (SGYCSYSMHILQCHTNHSRITFGLYLEKE) the chain is Extracellular. A glycan (N-linked (GlcNAc...) asparagine) is linked at N201. The helical transmembrane segment at 215 to 235 (FSDIMFIMPFNIFSMCYGFWL) threads the bilayer. Residues 236–237 (NG) lie on the Cytoplasmic side of the membrane. A helical membrane pass occupies residues 238–258 (AFTFLWNFMDIFIVMTSIGLA). At 259–304 (QRFQQFAARVGALEGRHVPEALWYDIRRDHIRLCELASLVEASMSN) the chain is on the extracellular side. The chain crosses the membrane as a helical span at residues 305–325 (IVFVSCANNVYVICNQALAIF). Residues 326 to 334 (TKLRHPINY) lie on the Cytoplasmic side of the membrane. A helical transmembrane segment spans residues 335–355 (VYFWYSLIFLLARTSLVFMTA). Residues 356–436 (SKIHDASLLP…AKSHKGLRCA (81 aa)) lie on the Extracellular side of the membrane.

The protein belongs to the insect chemoreceptor superfamily. Gustatory receptor (GR) family. Gr5a subfamily. Expressed in sweet sensing neurons of classical chemosensory sensilla, but also in two supersensitive neurons of atypical taste sensilla.

It is found in the cell membrane. One of the few identified sugar gustatory receptors identified so far with glucose being its primary ligand and which mediates acceptance behavior. The protein is Gustatory receptor for sugar taste 61a (Gr61a) of Drosophila melanogaster (Fruit fly).